Reading from the N-terminus, the 316-residue chain is Homoserine kinase (316 aa).

The protein belongs to the pseudomonas-type ThrB family.

The catalysed reaction is L-homoserine + ATP = O-phospho-L-homoserine + ADP + H(+). It functions in the pathway amino-acid biosynthesis; L-threonine biosynthesis; L-threonine from L-aspartate: step 4/5. The sequence is that of Homoserine kinase from Pseudomonas aeruginosa (strain LESB58).